Consider the following 627-residue polypeptide: Zinc cluster transcription factor acuM (627 aa).

Disordered regions lie at residues 1–40 (MGCR…PARP), 129–148 (NGTA…GTME), 155–193 (AEGD…RRKV), 225–258 (CHDE…FSNA), 277–305 (PDGT…QNSL), and 394–416 (AQPS…PSST). Polar residues predominate over residues 162–171 (MESGSKNTAS). A DNA-binding region (zn(2)-C6 fungal-type) is located at residues 197-225 (CVYCRRSHMTCDSERPCTRCIKRNIGHLC). The segment covering 225-251 (CHDEPREPSKRARSEHEHSTAEEDGHS) has biased composition (basic and acidic residues). Residues 286–305 (SSVSAVQHNTIPSSSAQNSL) are compositionally biased toward polar residues. Over residues 394–403 (AQPSQPTQSQ) the composition is skewed to low complexity. Over residues 404–416 (PHQNDSVQGPSST) the composition is skewed to polar residues.

The protein localises to the nucleus. In terms of biological role, transcription factor that governs genes involved in reductive and siderophore-mediated iron acquisition, and carbon metabolism. Suppresses the expression of sreA and induces hapX to stimulate expression of genes involved in both reductive iron assimilation and siderophore-mediated iron uptake which is essential for the maximal virulence. Also regulates genes involved in gluconeogenesis. In Aspergillus fumigatus (strain ATCC MYA-4609 / CBS 101355 / FGSC A1100 / Af293) (Neosartorya fumigata), this protein is Zinc cluster transcription factor acuM.